We begin with the raw amino-acid sequence, 440 residues long: uncharacterized protein (440 aa).

Positions 1–29 are cleaved as a signal peptide; the sequence is MLRLQMMEGLIVKRTLLLILLLVISVSYA.

Belongs to the Mj S-layer protein family.

This is an uncharacterized protein from Methanocaldococcus jannaschii (strain ATCC 43067 / DSM 2661 / JAL-1 / JCM 10045 / NBRC 100440) (Methanococcus jannaschii).